Here is a 154-residue protein sequence, read N- to C-terminus: Endoribonuclease YbeY (154 aa).

3 residues coordinate Zn(2+): His-113, His-117, and His-123.

The protein belongs to the endoribonuclease YbeY family. It depends on Zn(2+) as a cofactor.

The protein localises to the cytoplasm. Its function is as follows. Single strand-specific metallo-endoribonuclease involved in late-stage 70S ribosome quality control and in maturation of the 3' terminus of the 16S rRNA. The protein is Endoribonuclease YbeY of Ehrlichia chaffeensis (strain ATCC CRL-10679 / Arkansas).